A 710-amino-acid chain; its full sequence is Polyribonucleotide nucleotidyltransferase (710 aa).

Mg(2+) is bound by residues Asp-487 and Asp-493. In terms of domain architecture, KH spans 554 to 613; sequence PRIHTMKISAEKIKDVIGKGGAVIRALTEETGTTIEIEDDGTIKIAATEGAAAKEAIRRI. Residues 623-691 form the S1 motif domain; the sequence is GRIYTGKVAR…RQGRVRLSMK (69 aa). Residues 691-710 are disordered; that stretch reads KEAVEKPAEEANDASEAKGE.

Belongs to the polyribonucleotide nucleotidyltransferase family. Component of the RNA degradosome, which is a multiprotein complex involved in RNA processing and mRNA degradation. Mg(2+) serves as cofactor.

It localises to the cytoplasm. The enzyme catalyses RNA(n+1) + phosphate = RNA(n) + a ribonucleoside 5'-diphosphate. Its function is as follows. Involved in mRNA degradation. Catalyzes the phosphorolysis of single-stranded polyribonucleotides processively in the 3'- to 5'-direction. This is Polyribonucleotide nucleotidyltransferase from Vibrio campbellii (strain ATCC BAA-1116).